We begin with the raw amino-acid sequence, 166 residues long: MVVKIKGKVFVFGDNVNTDEIIPARYLNTSDPQELAKYCMEDARPGFGRRDDIKGSIIVAGENFGCGSSREHAPVAIKAAGISCVIAKSFARIFFRNAINIGLPIVELKEADEFEEGDIAEVDLENGVVRNLTKGKEYRIRPYPEFLMKIMEAGGWLEYCLKEVGE.

The protein belongs to the LeuD family. LeuD type 2 subfamily. As to quaternary structure, heterodimer of LeuC and LeuD.

It catalyses the reaction (2R,3S)-3-isopropylmalate = (2S)-2-isopropylmalate. Its pathway is amino-acid biosynthesis; L-leucine biosynthesis; L-leucine from 3-methyl-2-oxobutanoate: step 2/4. In terms of biological role, catalyzes the isomerization between 2-isopropylmalate and 3-isopropylmalate, via the formation of 2-isopropylmaleate. The polypeptide is 3-isopropylmalate dehydratase small subunit 2 (leuD2) (Thermotoga maritima (strain ATCC 43589 / DSM 3109 / JCM 10099 / NBRC 100826 / MSB8)).